The chain runs to 129 residues: Omega-scoloptoxin(05)-Ssm1a (129 aa).

An N-terminal signal peptide occupies residues 1 to 24 (MPSLCIIALFGTLTFYTLIPSIHT). A propeptide spanning residues 25 to 46 (LKCVRCDGPMSNYDCKTTYPAA) is cleaved from the precursor.

This sequence belongs to the scoloptoxin-05 family. Contains 3 disulfide bonds. In terms of tissue distribution, expressed by the venom gland.

It is found in the secreted. Toxin that increase voltage-gated calcium channel (Cav) currents in DRG neurons by 70% and 120%, when 1 uM and 10 uM are tested, respectively. This Scolopendra mutilans (Chinese red-headed centipede) protein is Omega-scoloptoxin(05)-Ssm1a.